Consider the following 951-residue polypeptide: Valine--tRNA ligase (951 aa).

Residues Pro-42–His-52 carry the 'HIGH' region motif. The 'KMSKS' region signature appears at Lys-554 to Ser-558. Lys-557 provides a ligand contact to ATP. The stretch at Ala-880–Gln-944 forms a coiled coil.

This sequence belongs to the class-I aminoacyl-tRNA synthetase family. ValS type 1 subfamily. Monomer.

Its subcellular location is the cytoplasm. The catalysed reaction is tRNA(Val) + L-valine + ATP = L-valyl-tRNA(Val) + AMP + diphosphate. In terms of biological role, catalyzes the attachment of valine to tRNA(Val). As ValRS can inadvertently accommodate and process structurally similar amino acids such as threonine, to avoid such errors, it has a 'posttransfer' editing activity that hydrolyzes mischarged Thr-tRNA(Val) in a tRNA-dependent manner. In Escherichia coli O6:H1 (strain CFT073 / ATCC 700928 / UPEC), this protein is Valine--tRNA ligase.